Reading from the N-terminus, the 433-residue chain is 3-phosphoshikimate 1-carboxyvinyltransferase (433 aa).

3-phosphoshikimate contacts are provided by K22, S23, and R27. K22 contacts phosphoenolpyruvate. Phosphoenolpyruvate is bound by residues G96 and R129. 3-phosphoshikimate-binding residues include S175, S176, Q177, S203, D318, N341, and K345. Position 177 (Q177) interacts with phosphoenolpyruvate. D318 serves as the catalytic Proton acceptor. R349, R393, and K418 together coordinate phosphoenolpyruvate.

Belongs to the EPSP synthase family. Monomer.

It localises to the cytoplasm. The catalysed reaction is 3-phosphoshikimate + phosphoenolpyruvate = 5-O-(1-carboxyvinyl)-3-phosphoshikimate + phosphate. The protein operates within metabolic intermediate biosynthesis; chorismate biosynthesis; chorismate from D-erythrose 4-phosphate and phosphoenolpyruvate: step 6/7. Catalyzes the transfer of the enolpyruvyl moiety of phosphoenolpyruvate (PEP) to the 5-hydroxyl of shikimate-3-phosphate (S3P) to produce enolpyruvyl shikimate-3-phosphate and inorganic phosphate. This is 3-phosphoshikimate 1-carboxyvinyltransferase from Mannheimia succiniciproducens (strain KCTC 0769BP / MBEL55E).